We begin with the raw amino-acid sequence, 114 residues long: uncharacterized protein (114 aa).

Positions 6 to 114 (IFKNIIQRKI…LGGKKLKSFS (109 aa)) constitute an HIT domain.

This is an uncharacterized protein from Buchnera aphidicola subsp. Acyrthosiphon pisum (strain APS) (Acyrthosiphon pisum symbiotic bacterium).